The following is a 509-amino-acid chain: Ribonuclease Y (509 aa).

A helical transmembrane segment spans residues 3 to 23 (WILYVILPAVCIILGWTIRWL). A KH domain is found at 199–284 (TVSTVSLPSD…EIVQKVTREI (86 aa)). The 94-residue stretch at 325-418 (VLQHSKEVAI…VQIADAISAA (94 aa)) folds into the HD domain.

Belongs to the RNase Y family.

It is found in the cell membrane. Its function is as follows. Endoribonuclease that initiates mRNA decay. The polypeptide is Ribonuclease Y (Treponema denticola (strain ATCC 35405 / DSM 14222 / CIP 103919 / JCM 8153 / KCTC 15104)).